Reading from the N-terminus, the 246-residue chain is MTMTLAKRFTAEVVGTFILVFFGPGAAVITLMIANGADKPNEFNIGIGALGGLGDWFAIGMAFALAIAAVIYSLGRISGAHINPAVTIALWSIGRFPGREVVPYIVAQFIGAALGSLLFLACVGPAAATVGGLGATAPFPGIGYGQAILTEAIGTFLLMLVIMGVAVDERAPPGFAGLVIGLTVGGIITTIGNITGSSLNPARTFGPYLGDSLMGINLWQYFPIYVIGPIVGAVAAAWLYNYLAKE.

The Cytoplasmic segment spans residues 1 to 12 (MTMTLAKRFTAE). A helical transmembrane segment spans residues 13 to 33 (VVGTFILVFFGPGAAVITLMI). At 34 to 56 (ANGADKPNEFNIGIGALGGLGDW) the chain is on the extracellular side. The helical transmembrane segment at 57–77 (FAIGMAFALAIAAVIYSLGRI) threads the bilayer. The Cytoplasmic portion of the chain corresponds to 78–104 (SGAHINPAVTIALWSIGRFPGREVVPY). The NPA 1 motif lies at 83–85 (NPA). A helical membrane pass occupies residues 105–125 (IVAQFIGAALGSLLFLACVGP). Over 126 to 146 (AAATVGGLGATAPFPGIGYGQ) the chain is Extracellular. The chain crosses the membrane as a helical span at residues 147-167 (AILTEAIGTFLLMLVIMGVAV). The Cytoplasmic portion of the chain corresponds to 168 to 173 (DERAPP). The helical transmembrane segment at 174 to 194 (GFAGLVIGLTVGGIITTIGNI) threads the bilayer. The Extracellular segment spans residues 195–217 (TGSSLNPARTFGPYLGDSLMGIN). Positions 200–202 (NPA) match the NPA 2 motif. A helical membrane pass occupies residues 218–238 (LWQYFPIYVIGPIVGAVAAAW). Topologically, residues 239–246 (LYNYLAKE) are cytoplasmic.

It belongs to the MIP/aquaporin (TC 1.A.8) family.

It localises to the cell membrane. Its function is as follows. Channel that permits osmotically driven movement of water in both directions. The polypeptide is Probable aquaporin AqpM (aqpM) (Archaeoglobus fulgidus (strain ATCC 49558 / DSM 4304 / JCM 9628 / NBRC 100126 / VC-16)).